An 800-amino-acid polypeptide reads, in one-letter code: Phenylalanine--tRNA ligase beta subunit (800 aa).

The region spanning 39 to 148 is the tRNA-binding domain; sequence TAALAPFVVG…ADTPVGVPLV (110 aa). The B5 domain maps to 402 to 478; it reads VWRRTIALRP…RLHGFDLVPA (77 aa). Mg(2+) contacts are provided by D456, D462, E465, and E466. The 94-residue stretch at 706-799 folds into the FDX-ACB domain; sequence SPFQPVARDF…VTKLTGGSLR (94 aa).

This sequence belongs to the phenylalanyl-tRNA synthetase beta subunit family. Type 1 subfamily. In terms of assembly, tetramer of two alpha and two beta subunits. Mg(2+) is required as a cofactor.

It localises to the cytoplasm. The enzyme catalyses tRNA(Phe) + L-phenylalanine + ATP = L-phenylalanyl-tRNA(Phe) + AMP + diphosphate + H(+). The protein is Phenylalanine--tRNA ligase beta subunit of Rhodospirillum rubrum (strain ATCC 11170 / ATH 1.1.1 / DSM 467 / LMG 4362 / NCIMB 8255 / S1).